A 429-amino-acid polypeptide reads, in one-letter code: Proton/sodium-glutamate symport protein (429 aa).

The Cytoplasmic portion of the chain corresponds to 1 to 5 (MKRIK). A helical membrane pass occupies residues 6–26 (FGLATQIFVGLILGVIVGVIW). Residues 27 to 45 (YGNPALPTYLQPIGDLFLR) lie on the Extracellular side of the membrane. The helical transmembrane segment at 46 to 66 (LIKMIVIPIVVSSLIIGVAGA) threads the bilayer. Residues 67 to 79 (GNGKQVGKLGFRT) are Cytoplasmic-facing. The helical transmembrane segment at 80 to 100 (ILYFEIITTFAIILGLALANI) threads the bilayer. Over 101–150 (FHPGTGVNIHEAQKSDISQYVETEKEQSNKSVAETFLHIVPTNFFQSLVE) the chain is Extracellular. The chain crosses the membrane as a helical span at residues 151 to 171 (GDLLAIICFTVLFALGISAIG). The Cytoplasmic portion of the chain corresponds to 172–190 (ERGKPVLAFFEGVSHAMFH). The helical transmembrane segment at 191-211 (VVNLVMKVAPFGVFALIGVTV) threads the bilayer. The Extracellular segment spans residues 212-224 (SKFGLGSLISLGK). The chain crosses the membrane as a helical span at residues 225–245 (LVGLVYVALAFFLIVIFGIVA). Position 246 (K246) is a topological domain, cytoplasmic. The helical transmembrane segment at 247–267 (IAGISIFKFLAYMKDEILLAF) threads the bilayer. Topologically, residues 268–290 (STSSSETVLPRIMEKMEKIGCPK) are extracellular. Residues 291–311 (GIVSFVIPIGYTFNLDGSVLY) traverse the membrane as a helical segment. Topologically, residues 312 to 321 (QSIAALFLAQ) are cytoplasmic. A helical membrane pass occupies residues 322-342 (VYGIDLTIWHQITLVLVLMVT). At 343–353 (SKGMAAVPGTS) the chain is on the extracellular side. The helical transmembrane segment at 354–374 (FVVLLATLGTIGVPAEGLAFI) threads the bilayer. Residues 375–429 (AGVDRIMDMARTVVNLTGNALAAVVMSKWEGMFNPAKAETVMSQSKTEQNATISG) lie on the Cytoplasmic side of the membrane.

This sequence belongs to the dicarboxylate/amino acid:cation symporter (DAACS) (TC 2.A.23) family. As to quaternary structure, homotrimer. Interacts with FloT.

The protein resides in the cell membrane. The protein localises to the membrane raft. Its function is as follows. This carrier protein is part of the Na(+)-dependent, binding-protein-independent glutamate-aspartate transport system. This Bacillus subtilis (strain 168) protein is Proton/sodium-glutamate symport protein (gltT).